The chain runs to 116 residues: Phycoerythrin alpha-3 subunit (116 aa).

Ser53, Glu63, Arg64, Cys67, and Lys85 together coordinate (2R,3E)-phycoerythrobilin.

The protein belongs to the phycoerythrin family. Heterotetramer of 2 different alpha chains and 2 identical beta chains which form 2 alpha-beta heterodimers within the heterotetramer. The two alpha-beta heterodimers are rotated to an open configuration in contrast to the closed configuration found in other cryptophyte species due to the insertion of a single amino acid, Asp-65, in a conserved region of the alpha chain. In the open form, the central chromophores are not in physical contact but are separated by a water-filled channel. Post-translationally, contains three phycoerythrobilin chromophores with binding mediated by both the alpha and beta subunits.

Its subcellular location is the plastid. The protein resides in the chloroplast thylakoid membrane. Light-harvesting photosynthetic tetrapyrrole chromophore-protein from the phycobiliprotein complex. The sequence is that of Phycoerythrin alpha-3 subunit from Hemiselmis andersenii (Cryptophyte alga).